Here is a 95-residue protein sequence, read N- to C-terminus: SMAD5 antisense gene protein 1 (95 aa).

Disordered stretches follow at residues 1–24 (MHKQ…SSWS) and 43–70 (SSPT…KPAN). Pro residues predominate over residues 7-19 (LLPPPATPPPPPQ).

Expressed in fetal tissues.

The polypeptide is SMAD5 antisense gene protein 1 (SMAD5-AS1) (Homo sapiens (Human)).